The following is a 599-amino-acid chain: Prostaglandin G/H synthase 1 (599 aa).

A signal peptide spans 1–23 (MSRSLLLWFLLFLLLLPPLPVLL). The EGF-like domain occupies 31–69 (PVNPCCYYPCQHQGICVRFGLDRYQCDCTRTGYSGPNCT). Intrachain disulfides connect cysteine 35/cysteine 46, cysteine 36/cysteine 158, cysteine 40/cysteine 56, and cysteine 58/cysteine 68. Asparagine 67, asparagine 103, and asparagine 143 each carry an N-linked (GlcNAc...) asparagine glycan. The active-site Proton acceptor is the histidine 206. Tyrosine 384 serves as the catalytic For cyclooxygenase activity. Residue histidine 387 participates in heme b binding. Cysteine 568 and cysteine 574 are joined by a disulfide.

This sequence belongs to the prostaglandin G/H synthase family. As to quaternary structure, homodimer. Heme b serves as cofactor.

It is found in the microsome membrane. It localises to the endoplasmic reticulum membrane. It carries out the reaction (5Z,8Z,11Z,14Z)-eicosatetraenoate + AH2 + 2 O2 = prostaglandin H2 + A + H2O. The enzyme catalyses (5Z,8Z,11Z,14Z)-eicosatetraenoate + 2 O2 = prostaglandin G2. It catalyses the reaction prostaglandin G2 + AH2 = prostaglandin H2 + A + H2O. The catalysed reaction is (9Z,12Z)-octadecadienoate + AH2 + O2 = (9R)-hydroxy-(10E,12Z)-octadecadienoate + A + H2O. It carries out the reaction (9Z,12Z)-octadecadienoate + AH2 + O2 = (9S)-hydroxy-(10E,12Z)-octadecadienoate + A + H2O. The enzyme catalyses (9Z,12Z)-octadecadienoate + AH2 + O2 = (13S)-hydroxy-(9Z,11E)-octadecadienoate + A + H2O. It catalyses the reaction (9Z,12Z)-octadecadienoate + AH2 + O2 = (13R)-hydroxy-(9Z,11E)-octadecadienoate + A + H2O. It functions in the pathway lipid metabolism; prostaglandin biosynthesis. The cyclooxygenase activity is inhibited by nonsteroidal anti-inflammatory drugs (NSAIDs) including ibuprofen, flurbiprofen, ketoprofen, naproxen, flurbiprofen, anirolac, fenclofenac and diclofenac. In terms of biological role, dual cyclooxygenase and peroxidase that plays an important role in the biosynthesis pathway of prostanoids, a class of C20 oxylipins mainly derived from arachidonate ((5Z,8Z,11Z,14Z)-eicosatetraenoate, AA, C20:4(n-6)), with a particular role in the inflammatory response. The cyclooxygenase activity oxygenates AA to the hydroperoxy endoperoxide prostaglandin G2 (PGG2), and the peroxidase activity reduces PGG2 to the hydroxy endoperoxide prostaglandin H2 (PGH2), the precursor of all 2-series prostaglandins and thromboxanes. This complex transformation is initiated by abstraction of hydrogen at carbon 13 (with S-stereochemistry), followed by insertion of molecular O2 to form the endoperoxide bridge between carbon 9 and 11 that defines prostaglandins. The insertion of a second molecule of O2 (bis-oxygenase activity) yields a hydroperoxy group in PGG2 that is then reduced to PGH2 by two electrons. Involved in the constitutive production of prostanoids in particular in the stomach and platelets. In gastric epithelial cells, it is a key step in the generation of prostaglandins, such as prostaglandin E2 (PGE2), which plays an important role in cytoprotection. In platelets, it is involved in the generation of thromboxane A2 (TXA2), which promotes platelet activation and aggregation, vasoconstriction and proliferation of vascular smooth muscle cells. Can also use linoleate (LA, (9Z,12Z)-octadecadienoate, C18:2(n-6)) as substrate and produce hydroxyoctadecadienoates (HODEs) in a regio- and stereospecific manner, being (9R)-HODE ((9R)-hydroxy-(10E,12Z)-octadecadienoate) and (13S)-HODE ((13S)-hydroxy-(9Z,11E)-octadecadienoate) its major products. This Homo sapiens (Human) protein is Prostaglandin G/H synthase 1.